The sequence spans 136 residues: Translation initiation factor 5A (136 aa).

At lysine 38 the chain carries Hypusine.

The protein belongs to the eIF-5A family.

It localises to the cytoplasm. Its function is as follows. Functions by promoting the formation of the first peptide bond. This Methanopyrus kandleri (strain AV19 / DSM 6324 / JCM 9639 / NBRC 100938) protein is Translation initiation factor 5A.